The primary structure comprises 760 residues: Probable ATP-dependent RNA helicase DDX27 (760 aa).

The tract at residues 1–50 (MLAELGFIRTIGENDEVPVEPESDSGDEEEEGPIVLGRKQKALQKNRSAD) is disordered. Residues 13 to 32 (ENDEVPVEPESDSGDEEEEG) are compositionally biased toward acidic residues. A phosphoserine mark is found at Ser23, Ser25, and Ser48. The Required for interaction with the PEBOW complex signature appears at 55–57 (FVF). Residues 80 to 149 (KRAATTLDEK…TDYSSEDEEI (70 aa)) form a disordered region. Basic and acidic residues predominate over residues 98–122 (KAEDKEAKSGKVEEKEGQADSDLKG). Residues 126-148 (PGEDEAGSKDEDSETDYSSEDEE) are compositionally biased toward acidic residues. 2 positions are modified to phosphoserine: Ser133 and Ser144. Residues 157–166 (KVKEKKKKKK) carry the Nuclear localization signal motif. Positions 184 to 212 (LSFQDMNLSRPLLKAITAMGFKQPTPIQK) match the Q motif motif. The region spanning 215–389 (IPVGLLGKDI…SVSLKNPVRI (175 aa)) is the Helicase ATP-binding domain. 228-235 (AATGTGKT) lines the ATP pocket. A DEAD box motif is present at residues 337–340 (DEAD). Residues 419–569 (IVAALLMRTF…DVILKFRDKI (151 aa)) enclose the Helicase C-terminal domain. 2 disordered regions span residues 605–624 (KGKE…TKEE) and 679–760 (RLAK…KRKK). 2 stretches are compositionally biased toward basic residues: residues 682–691 (KRNRRTKRAR) and 744–760 (RQRR…KRKK).

The protein belongs to the DEAD box helicase family. DDX27/DRS1 subfamily. In terms of assembly, associates with PeBoW complex, composed of BOP1, PES1 and WDR12. Interacts directly with BOP1 and PES1.

Its subcellular location is the nucleus. It is found in the nucleolus. The protein resides in the chromosome. The catalysed reaction is ATP + H2O = ADP + phosphate + H(+). Its function is as follows. Probable ATP-dependent RNA helicase. Component of the nucleolar ribosomal RNA (rRNA) processing machinery that regulates 3' end formation of ribosomal 47S rRNA. This Mus musculus (Mouse) protein is Probable ATP-dependent RNA helicase DDX27 (Ddx27).